Reading from the N-terminus, the 223-residue chain is 7-cyano-7-deazaguanine synthase (223 aa).

15–25 lines the ATP pocket; it reads FSGGQDSTTCL. Zn(2+) contacts are provided by C191, C200, C203, and C206.

Belongs to the QueC family. Homodimer. Zn(2+) is required as a cofactor.

The catalysed reaction is 7-carboxy-7-deazaguanine + NH4(+) + ATP = 7-cyano-7-deazaguanine + ADP + phosphate + H2O + H(+). It participates in purine metabolism; 7-cyano-7-deazaguanine biosynthesis. In terms of biological role, catalyzes the ATP-dependent conversion of 7-carboxy-7-deazaguanine (CDG) to 7-cyano-7-deazaguanine (preQ(0)). In Staphylococcus epidermidis (strain ATCC 35984 / DSM 28319 / BCRC 17069 / CCUG 31568 / BM 3577 / RP62A), this protein is 7-cyano-7-deazaguanine synthase.